Here is a 184-residue protein sequence, read N- to C-terminus: Bacterial microcompartment shell protein PduT (184 aa).

2 consecutive BMC domains span residues Ala-4–Ser-86 and Ala-96–Val-182. Cys-38 provides a ligand contact to [4Fe-4S] cluster.

It belongs to the bacterial microcompartments protein family. In terms of assembly, homotrimerizes to form a pseudohexamer with a large central pore, which is probably the binding site for the [4Fe-4S] center. Interacts with PduS. Originally suggested to be a homotetramer; this is incorrect. Requires [4Fe-4S] cluster as cofactor.

It is found in the bacterial microcompartment. The protein operates within polyol metabolism; 1,2-propanediol degradation. In terms of biological role, a minor shell protein of the bacterial microcompartment (BMC) dedicated to 1,2-propanediol (1,2-PD) degradation. Overexpression of this protein leads to cells with either deposits or having lamina-like structures in the cytoplasm. Not absolutely required to make artificial BMCs. May selectively transport specific metabolites. Expression of a cosmid containing the full 21-gene pdu operon in E.coli allows E.coli to grow on 1,2-propanediol (1,2-PD) with the appearance of bacterial microcompartments (BMC) in its cytoplasm. Its function is as follows. The 1,2-PD-specific bacterial microcompartment (BMC) concentrates low levels of 1,2-PD catabolic enzymes, concentrates volatile reaction intermediates thus enhancing pathway flux and keeps the level of toxic, mutagenic propionaldehyde low. The chain is Bacterial microcompartment shell protein PduT from Citrobacter freundii.